The primary structure comprises 153 residues: NADPH-dependent 7-cyano-7-deazaguanine reductase (153 aa).

Residues 1–26 form a disordered region; sequence MVKIHDGASQLGANVAAPRSPEEATL. The Thioimide intermediate role is filled by Cys51. The active-site Proton donor is Asp58. Residues 73 to 75 and 92 to 93 contribute to the substrate site; these read VES and HE.

It belongs to the GTP cyclohydrolase I family. QueF type 1 subfamily.

The protein localises to the cytoplasm. It carries out the reaction 7-aminomethyl-7-carbaguanine + 2 NADP(+) = 7-cyano-7-deazaguanine + 2 NADPH + 3 H(+). The protein operates within tRNA modification; tRNA-queuosine biosynthesis. Catalyzes the NADPH-dependent reduction of 7-cyano-7-deazaguanine (preQ0) to 7-aminomethyl-7-deazaguanine (preQ1). This Methylocella silvestris (strain DSM 15510 / CIP 108128 / LMG 27833 / NCIMB 13906 / BL2) protein is NADPH-dependent 7-cyano-7-deazaguanine reductase.